A 386-amino-acid polypeptide reads, in one-letter code: DNA (cytosine-5)-methyltransferase 3-like (386 aa).

An ADD domain is found at E41–E173. The GATA-type; atypical zinc-finger motif lies at I52–D82. The PHD-type; atypical zinc-finger motif lies at Q93–S149.

As to quaternary structure, homodimer. Heterotetramer composed of 1 DNMT3A homodimer and 2 DNMT3L subunits (DNMT3L-DNMT3A-DNMT3A-DNMT3L). Interacts with histone H3 (via N-terminus); interaction is strongly inhibited by methylation at lysine 4 (H3K4me). Interacts with EZH2; the interaction is direct. Interacts with SPOCD1. As to expression, expressed at low levels in several tissues including testis, ovary, and thymus.

The protein localises to the nucleus. Catalytically inactive regulatory factor of DNA methyltransferases that can either promote or inhibit DNA methylation depending on the context. Essential for the function of DNMT3A and DNMT3B: activates DNMT3A and DNMT3B by binding to their catalytic domain. Acts by accelerating the binding of DNA and S-adenosyl-L-methionine (AdoMet) to the methyltransferases and dissociates from the complex after DNA binding to the methyltransferases. Recognizes unmethylated histone H3 lysine 4 (H3K4me0) and induces de novo DNA methylation by recruitment or activation of DNMT3. Plays a key role in embryonic stem cells and germ cells. In germ cells, required for the methylation of imprinted loci together with DNMT3A. In male germ cells, specifically required to methylate retrotransposons, preventing their mobilization. Plays a key role in embryonic stem cells (ESCs) by acting both as an positive and negative regulator of DNA methylation. While it promotes DNA methylation of housekeeping genes together with DNMT3A and DNMT3B, it also acts as an inhibitor of DNA methylation at the promoter of bivalent genes. Interacts with the EZH2 component of the PRC2/EED-EZH2 complex, preventing interaction of DNMT3A and DNMT3B with the PRC2/EED-EZH2 complex, leading to maintain low methylation levels at the promoters of bivalent genes. Promotes differentiation of ESCs into primordial germ cells by inhibiting DNA methylation at the promoter of RHOX5, thereby activating its expression. The protein is DNA (cytosine-5)-methyltransferase 3-like (DNMT3L) of Homo sapiens (Human).